The chain runs to 62 residues: Keratin-associated protein 19-5 (62 aa).

Positions 5 to 56 (GSYYGGLGSGIRGFGNLGYGYGCGCGFGGYGYGSGYGRYGYGYPRPLYYGGY) are 14 X 2 AA repeats of G-[YCGS].

This sequence belongs to the KRTAP type 19 family. Interacts with hair keratins. In terms of tissue distribution, expressed in skin during two hair growth cycles. Expression restricted to the cortical cells of hair follicles, appearing first in the cortical cells processing the flat nuclei located a few cells above the dermal papilla.

Its function is as follows. In the hair cortex, hair keratin intermediate filaments are embedded in an interfilamentous matrix, consisting of hair keratin-associated proteins (KRTAP), which are essential for the formation of a rigid and resistant hair shaft through their extensive disulfide bond cross-linking with abundant cysteine residues of hair keratins. The matrix proteins include the high-sulfur and high-glycine-tyrosine keratins. The protein is Keratin-associated protein 19-5 (Krtap19-5) of Mus musculus (Mouse).